The following is a 338-amino-acid chain: Lipoate-protein ligase A (338 aa).

The BPL/LPL catalytic domain maps to proline 29–valine 216. ATP-binding positions include arginine 71, glycine 76–phenylalanine 79, and lysine 134. Position 134 (lysine 134) interacts with (R)-lipoate.

Belongs to the LplA family. As to quaternary structure, monomer.

It localises to the cytoplasm. It carries out the reaction L-lysyl-[lipoyl-carrier protein] + (R)-lipoate + ATP = N(6)-[(R)-lipoyl]-L-lysyl-[lipoyl-carrier protein] + AMP + diphosphate + H(+). It participates in protein modification; protein lipoylation via exogenous pathway; protein N(6)-(lipoyl)lysine from lipoate: step 1/2. The protein operates within protein modification; protein lipoylation via exogenous pathway; protein N(6)-(lipoyl)lysine from lipoate: step 2/2. Its function is as follows. Catalyzes both the ATP-dependent activation of exogenously supplied lipoate to lipoyl-AMP and the transfer of the activated lipoyl onto the lipoyl domains of lipoate-dependent enzymes. The polypeptide is Lipoate-protein ligase A (Salmonella newport (strain SL254)).